Reading from the N-terminus, the 157-residue chain is dCTP deaminase (157 aa).

DCTP-binding positions include 79-84, D95, Q124, and Y138; that span reads RSSLAR.

Belongs to the dCTP deaminase family. In terms of assembly, homotrimer.

The enzyme catalyses dCTP + H2O + H(+) = dUTP + NH4(+). It functions in the pathway pyrimidine metabolism; dUMP biosynthesis; dUMP from dCTP (dUTP route): step 1/2. Its function is as follows. Catalyzes the deamination of dCTP to dUTP. The chain is dCTP deaminase from Thermococcus gammatolerans (strain DSM 15229 / JCM 11827 / EJ3).